A 273-amino-acid chain; its full sequence is Formamidopyrimidine-DNA glycosylase (273 aa).

The active-site Schiff-base intermediate with DNA is the P2. E3 acts as the Proton donor in catalysis. The active-site Proton donor; for beta-elimination activity is K58. DNA-binding residues include H91 and R110. Residues 238–272 (QVYGKTGQPCPRCASMIVKIKLGGRGTHLCPHCQK) form an FPG-type zinc finger. R262 serves as the catalytic Proton donor; for delta-elimination activity.

The protein belongs to the FPG family. Monomer. It depends on Zn(2+) as a cofactor.

The enzyme catalyses Hydrolysis of DNA containing ring-opened 7-methylguanine residues, releasing 2,6-diamino-4-hydroxy-5-(N-methyl)formamidopyrimidine.. The catalysed reaction is 2'-deoxyribonucleotide-(2'-deoxyribose 5'-phosphate)-2'-deoxyribonucleotide-DNA = a 3'-end 2'-deoxyribonucleotide-(2,3-dehydro-2,3-deoxyribose 5'-phosphate)-DNA + a 5'-end 5'-phospho-2'-deoxyribonucleoside-DNA + H(+). Involved in base excision repair of DNA damaged by oxidation or by mutagenic agents. Acts as a DNA glycosylase that recognizes and removes damaged bases. Has a preference for oxidized purines, such as 7,8-dihydro-8-oxoguanine (8-oxoG). Has AP (apurinic/apyrimidinic) lyase activity and introduces nicks in the DNA strand. Cleaves the DNA backbone by beta-delta elimination to generate a single-strand break at the site of the removed base with both 3'- and 5'-phosphates. The polypeptide is Formamidopyrimidine-DNA glycosylase (Streptococcus thermophilus (strain CNRZ 1066)).